Here is a 122-residue protein sequence, read N- to C-terminus: Large ribosomal subunit protein bL12 (122 aa).

The protein belongs to the bacterial ribosomal protein bL12 family. In terms of assembly, homodimer. Part of the ribosomal stalk of the 50S ribosomal subunit. Forms a multimeric L10(L12)X complex, where L10 forms an elongated spine to which 2 to 4 L12 dimers bind in a sequential fashion. Binds GTP-bound translation factors.

Forms part of the ribosomal stalk which helps the ribosome interact with GTP-bound translation factors. Is thus essential for accurate translation. The sequence is that of Large ribosomal subunit protein bL12 from Sodalis glossinidius (strain morsitans).